Reading from the N-terminus, the 1057-residue chain is Carbamoyl phosphate synthase large chain (1057 aa).

The segment at 1–401 (MPKRNDIKTI…SLLKAIRSLE (401 aa)) is carboxyphosphate synthetic domain. 12 residues coordinate ATP: Arg129, Arg169, Gly175, Gly176, Lys208, Ile210, Glu215, Gly241, Ile242, His243, Gln284, and Glu298. In terms of domain architecture, ATP-grasp 1 spans 133 to 327 (RTLMNDLNVP…IAKLAAKIAV (195 aa)). 3 residues coordinate Mg(2+): Gln284, Glu298, and Asn300. Residues Gln284, Glu298, and Asn300 each coordinate Mn(2+). An oligomerization domain region spans residues 402 to 546 (YGVHHLGLPN…YGTYETENES (145 aa)). The interval 547–929 (IVTDKEKILV…ALFKGLTGSG (383 aa)) is carbamoyl phosphate synthetic domain. The region spanning 671 to 861 (EALLRKINVP…MAQLAMRAII (191 aa)) is the ATP-grasp 2 domain. ATP is bound by residues Arg707, Arg746, Leu748, Glu752, Gly777, Val778, His779, Ser780, Gln820, and Glu832. The Mg(2+) site is built by Gln820, Glu832, and Asn834. Positions 820, 832, and 834 each coordinate Mn(2+). The MGS-like domain occupies 930-1057 (VEVKDHGTVL…ESMTFTMRQM (128 aa)). Positions 930–1057 (VEVKDHGTVL…ESMTFTMRQM (128 aa)) are allosteric domain.

The protein belongs to the CarB family. As to quaternary structure, composed of two chains; the small (or glutamine) chain promotes the hydrolysis of glutamine to ammonia, which is used by the large (or ammonia) chain to synthesize carbamoyl phosphate. Tetramer of heterodimers (alpha,beta)4. Mg(2+) is required as a cofactor. Mn(2+) serves as cofactor.

The enzyme catalyses hydrogencarbonate + L-glutamine + 2 ATP + H2O = carbamoyl phosphate + L-glutamate + 2 ADP + phosphate + 2 H(+). It carries out the reaction hydrogencarbonate + NH4(+) + 2 ATP = carbamoyl phosphate + 2 ADP + phosphate + 2 H(+). The protein operates within amino-acid biosynthesis; L-arginine biosynthesis; carbamoyl phosphate from bicarbonate: step 1/1. Its pathway is pyrimidine metabolism; UMP biosynthesis via de novo pathway; (S)-dihydroorotate from bicarbonate: step 1/3. Large subunit of the glutamine-dependent carbamoyl phosphate synthetase (CPSase). CPSase catalyzes the formation of carbamoyl phosphate from the ammonia moiety of glutamine, carbonate, and phosphate donated by ATP, constituting the first step of 2 biosynthetic pathways, one leading to arginine and/or urea and the other to pyrimidine nucleotides. The large subunit (synthetase) binds the substrates ammonia (free or transferred from glutamine from the small subunit), hydrogencarbonate and ATP and carries out an ATP-coupled ligase reaction, activating hydrogencarbonate by forming carboxy phosphate which reacts with ammonia to form carbamoyl phosphate. The sequence is that of Carbamoyl phosphate synthase large chain from Staphylococcus aureus (strain Mu3 / ATCC 700698).